Consider the following 428-residue polypeptide: Glutamate-1-semialdehyde 2,1-aminomutase 2 (428 aa).

Lys-267 carries the N6-(pyridoxal phosphate)lysine modification.

This sequence belongs to the class-III pyridoxal-phosphate-dependent aminotransferase family. HemL subfamily. Homodimer. Requires pyridoxal 5'-phosphate as cofactor.

It localises to the cytoplasm. The enzyme catalyses (S)-4-amino-5-oxopentanoate = 5-aminolevulinate. The protein operates within porphyrin-containing compound metabolism; protoporphyrin-IX biosynthesis; 5-aminolevulinate from L-glutamyl-tRNA(Glu): step 2/2. This chain is Glutamate-1-semialdehyde 2,1-aminomutase 2, found in Oceanobacillus iheyensis (strain DSM 14371 / CIP 107618 / JCM 11309 / KCTC 3954 / HTE831).